Here is a 255-residue protein sequence, read N- to C-terminus: MASSDLEQLCSHVNEKIGNIKKTLSLRNCGQEPTLKTVLNKIGDEIIVINELLNKLELEIQYQEQTNNSLKELCESLEEDYKDIEHLKENVPSHLPQVTVTQSCVKGSDLDPEEPIKVEEPEPVKKPPKEQRSIKEMPFITCDEFNGVPSYMKSRLTYNQINDVIKEINKAVISKYKILHQPKKSMNSVTRNLYHRFIDEETKDTKGRYFIVEADIKEFTTLKADKKFHVLLNILRHCRRLSEVRGGGLTRYVIT.

Ala-2 carries the N-acetylalanine modification. Positions Ile-49–Val-91 form a coiled coil. Positions Pro-92–Arg-132 are flexiple loop that anchors MAPRE1. An SXLP motif; mediates interaction with MAPRE1, targeting to microtubule plus ends, stabilization on kinetochores and is required for proper chromosome alignment to the metaphase plate motif is present at residues Ser-93–Pro-96. A disordered region spans residues Lys-106–Gln-131. Over residues Glu-114–Gln-131 the composition is skewed to basic and acidic residues. Residues Arg-132–Thr-255 are binds microtubules and protein phosphatase PP1 subunit PPP1CA. Thr-157 is subject to Phosphothreonine; by AURKB. Ser-242 is subject to Phosphoserine; by AURKB.

It belongs to the SKA1 family. Component of the SKA complex, composed of SKA1, SKA2 and SKA3. The SKA complex is a homodimer organized around a central W-shaped coiled-coil structure, formed by the interacting domains of SKA1, SKA2, and SKA3, each end of the 'W' is extended further by the C-terminal microtubule-binding domains of SKA1 and SKA3; the complex forms extended structures on microtubules. Interacts (via SXLP motif) with MAPRE1 (via C-terminus); the interaction is direct and stabilizes the kinetochore-microtubule attachment of the SKA1 complex. Interacts (via C-terminus) with protein phosphatase PP1 subunit PPP1CA; the interaction is direct and required for recruitment of PPP1CA to the kinetochore. Interacts with the NDC80 complex; the interaction is required to establish kinetochore-microtubule end-on attachments. Phosphorylated by AURKB at Thr-157 and Ser-242 which negatively regulates the association of the SKA complex with kinetochores to allow correction of aberrant kinetochore-microtubule interactions and promote mitotic sister chromatid biorientation.

Its subcellular location is the cytoplasm. The protein localises to the cytoskeleton. It localises to the spindle. The protein resides in the chromosome. It is found in the centromere. Its subcellular location is the kinetochore. The protein localises to the microtubule organizing center. It localises to the centrosome. In terms of biological role, component of the SKA complex, a microtubule plus end-binding complex of the outer kinetochore that stabilizes spindle microtubule-kinetochore attachments, promotes alignment of chromosomes at the mitotic spindle equator (chromosome congression) and assists suppression of the spindle assembly checkpoint. Kinetochores, consisting of a centromere-associated inner segment and a microtubule-contacting outer segment, play a crucial role in chromosome segregation by mediating the physical connection between centromeric DNA and spindle microtubules. The outer kinetochore is made up of the ten-subunit KMN network complex, comprising the MIS12, NDC80 and KNL1 complexes, and auxiliary microtubule-associated components such as the SKA complex; together they connect the outer kinetochore with the inner kinetochore, bind microtubules, and mediate interactions with mitotic checkpoint proteins that delay anaphase until chromosomes are bioriented on the spindle. The SKA complex is loaded onto bioriented kinetochores and it facilitates chromosome congression by stabilizing microtubules together with MAPRE1, and end-on attachment of the NDC80 complex to depolymerizing spindle microtubules, thereby assisting the poleward-moving kinetochore in withstanding microtubule pulling forces. The complex associates with dynamic microtubule plus-ends and can track both depolymerizing and elongating microtubules. The complex recruits protein phosphatase 1 (PP1) to the kinetochore in prometaphase and metaphase, to oppose spindle assembly checkpoint signaling and promote the onset of anaphase. In the complex, it mediates interactions with microtubules. It also stimulates AURKB/Aurora B catalytic activity. During meiosis the SKA complex stabilizes the meiotic spindle and is required for its migration to the cortex. The protein is SKA complex subunit 1 (SKA1) of Homo sapiens (Human).